The primary structure comprises 562 residues: Cytosolic Fe-S cluster assembly factor nar1 (562 aa).

Cys-20 contacts [4Fe-4S] cluster. The interval 28–47 is disordered; that stretch reads PKNESSNSQNPYEVTTEDKV. Positions 29-40 are enriched in polar residues; that stretch reads KNESSNSQNPYE. Positions 62, 65, 68, 214, and 269 each coordinate [4Fe-4S] cluster. Positions 439–462 are disordered; it reads ARVPAASAGGNRRQPISRNSASAG. A compositionally biased stretch (polar residues) spans 452–462; it reads QPISRNSASAG. [4Fe-4S] cluster-binding residues include Cys-475 and Cys-479. 2 disordered regions span residues 492 to 513 and 541 to 562; these read REAS…PTPH and HSPS…IGLT. The span at 494 to 505 shows a compositional bias: polar residues; the sequence is ASTSTQSVTAVE.

The protein belongs to the NARF family.

Functionally, component of the cytosolic Fe/S protein assembly machinery. Required for maturation of extramitochondrial Fe/S proteins. May play a role in the transfer of pre-assembled Fe/S clusters to target apoproteins. The chain is Cytosolic Fe-S cluster assembly factor nar1 (nar1) from Aspergillus flavus (strain ATCC 200026 / FGSC A1120 / IAM 13836 / NRRL 3357 / JCM 12722 / SRRC 167).